A 400-amino-acid polypeptide reads, in one-letter code: Bifunctional enzyme IspD/IspF (400 aa).

Positions 1-235 (MSLWTVLLAA…LAEAAAPPVP (235 aa)) are 2-C-methyl-D-erythritol 4-phosphate cytidylyltransferase. Residues 236–400 (VTGYGYDVHR…VALVSGWRRP (165 aa)) are 2-C-methyl-D-erythritol 2,4-cyclodiphosphate synthase. Residues D242 and H244 each coordinate a divalent metal cation. 4-CDP-2-C-methyl-D-erythritol 2-phosphate-binding positions include 242–244 (DVH) and 276–277 (HS). H284 serves as a coordination point for a divalent metal cation. 4-CDP-2-C-methyl-D-erythritol 2-phosphate contacts are provided by residues 298–300 (DIG), 303–307 (FPDSN), 374–377 (TTEE), and F381.

The protein in the N-terminal section; belongs to the IspD/TarI cytidylyltransferase family. IspD subfamily. This sequence in the C-terminal section; belongs to the IspF family. Requires a divalent metal cation as cofactor.

The enzyme catalyses 2-C-methyl-D-erythritol 4-phosphate + CTP + H(+) = 4-CDP-2-C-methyl-D-erythritol + diphosphate. It carries out the reaction 4-CDP-2-C-methyl-D-erythritol 2-phosphate = 2-C-methyl-D-erythritol 2,4-cyclic diphosphate + CMP. It functions in the pathway isoprenoid biosynthesis; isopentenyl diphosphate biosynthesis via DXP pathway; isopentenyl diphosphate from 1-deoxy-D-xylulose 5-phosphate: step 2/6. The protein operates within isoprenoid biosynthesis; isopentenyl diphosphate biosynthesis via DXP pathway; isopentenyl diphosphate from 1-deoxy-D-xylulose 5-phosphate: step 4/6. Bifunctional enzyme that catalyzes the formation of 4-diphosphocytidyl-2-C-methyl-D-erythritol from CTP and 2-C-methyl-D-erythritol 4-phosphate (MEP) (IspD), and catalyzes the conversion of 4-diphosphocytidyl-2-C-methyl-D-erythritol 2-phosphate (CDP-ME2P) to 2-C-methyl-D-erythritol 2,4-cyclodiphosphate (ME-CPP) with a corresponding release of cytidine 5-monophosphate (CMP) (IspF). This Solidesulfovibrio magneticus (strain ATCC 700980 / DSM 13731 / RS-1) (Desulfovibrio magneticus) protein is Bifunctional enzyme IspD/IspF.